A 207-amino-acid chain; its full sequence is Ribosomal RNA small subunit methyltransferase G (207 aa).

Residues G76, Q81, 127–128 (VE), and R141 each bind S-adenosyl-L-methionine.

Belongs to the methyltransferase superfamily. RNA methyltransferase RsmG family.

The protein localises to the cytoplasm. It carries out the reaction guanosine(527) in 16S rRNA + S-adenosyl-L-methionine = N(7)-methylguanosine(527) in 16S rRNA + S-adenosyl-L-homocysteine. Functionally, specifically methylates the N7 position of guanine in position 527 of 16S rRNA. This chain is Ribosomal RNA small subunit methyltransferase G, found in Neisseria meningitidis serogroup B (strain ATCC BAA-335 / MC58).